The primary structure comprises 168 residues: Large ribosomal subunit protein uL5 (168 aa).

It belongs to the universal ribosomal protein uL5 family. As to quaternary structure, part of the 50S ribosomal subunit; contacts the 5S rRNA and probably tRNA. Forms a bridge to the 30S subunit in the 70S ribosome.

This is one of the proteins that bind and probably mediate the attachment of the 5S RNA into the large ribosomal subunit, where it forms part of the central protuberance. In the 70S ribosome it contacts protein S13 of the 30S subunit (bridge B1b), connecting the 2 subunits; this bridge is implicated in subunit movement. May contact the P site tRNA; the 5S rRNA and some of its associated proteins might help stabilize positioning of ribosome-bound tRNAs. This Methanosphaera stadtmanae (strain ATCC 43021 / DSM 3091 / JCM 11832 / MCB-3) protein is Large ribosomal subunit protein uL5.